The primary structure comprises 264 residues: Thymidylate synthase (264 aa).

DUMP is bound at residue Arg21. Residue His51 coordinates (6R)-5,10-methylene-5,6,7,8-tetrahydrofolate. 126-127 is a dUMP binding site; sequence RR. Cys146 serves as the catalytic Nucleophile. DUMP is bound by residues 166–169, Asn177, and 207–209; these read RSVD and HLY. Residue Asp169 participates in (6R)-5,10-methylene-5,6,7,8-tetrahydrofolate binding. Ala263 is a binding site for (6R)-5,10-methylene-5,6,7,8-tetrahydrofolate.

The protein belongs to the thymidylate synthase family. Bacterial-type ThyA subfamily. As to quaternary structure, homodimer.

The protein resides in the cytoplasm. It carries out the reaction dUMP + (6R)-5,10-methylene-5,6,7,8-tetrahydrofolate = 7,8-dihydrofolate + dTMP. It participates in pyrimidine metabolism; dTTP biosynthesis. Functionally, catalyzes the reductive methylation of 2'-deoxyuridine-5'-monophosphate (dUMP) to 2'-deoxythymidine-5'-monophosphate (dTMP) while utilizing 5,10-methylenetetrahydrofolate (mTHF) as the methyl donor and reductant in the reaction, yielding dihydrofolate (DHF) as a by-product. This enzymatic reaction provides an intracellular de novo source of dTMP, an essential precursor for DNA biosynthesis. In Geobacillus sp. (strain WCH70), this protein is Thymidylate synthase.